The primary structure comprises 519 residues: Zinc finger and BTB domain-containing protein 18.3 (519 aa).

The region spanning 24 to 91 (CDCTVLVGDA…MYEGKLQFKD (68 aa)) is the BTB domain. Positions 189–227 (ASIPQTGGEVDTHTTAAGKTADSPCSSTGSLSHRSATSM) are disordered. Polar residues predominate over residues 201-227 (HTTAAGKTADSPCSSTGSLSHRSATSM). C2H2-type zinc fingers lie at residues 367-389 (FMCPLCNKVFPSPHILQIHLSTH), 407-429 (PTCSLCGKTFSCMYTLKRHERTH), 435-457 (FTCTQCGKSFQYSHNLSRHAVVH), and 463-486 (HACKWCERRFTQSGDLYRHIRKFH).

This sequence belongs to the krueppel C2H2-type zinc-finger protein family. ZBTB18 subfamily.

It localises to the nucleus. In terms of biological role, transcriptional repressor that plays a role in various developmental processes. Specifically binds the consensus DNA sequence 5'-[AC]ACATCTG[GT][AC]-3' which contains the E box core, and acts by recruiting chromatin remodeling multiprotein complexes. The sequence is that of Zinc finger and BTB domain-containing protein 18.3 (zbtb18.3) from Xenopus laevis (African clawed frog).